The chain runs to 247 residues: 7-cyano-7-deazaguanine synthase (247 aa).

Position 21-31 (21-31) interacts with ATP; the sequence is FSGGQDSTACL. 4 residues coordinate Zn(2+): cysteine 209, cysteine 224, cysteine 227, and cysteine 230.

This sequence belongs to the QueC family. Requires Zn(2+) as cofactor.

It carries out the reaction 7-carboxy-7-deazaguanine + NH4(+) + ATP = 7-cyano-7-deazaguanine + ADP + phosphate + H2O + H(+). It functions in the pathway purine metabolism; 7-cyano-7-deazaguanine biosynthesis. Functionally, catalyzes the ATP-dependent conversion of 7-carboxy-7-deazaguanine (CDG) to 7-cyano-7-deazaguanine (preQ(0)). The chain is 7-cyano-7-deazaguanine synthase from Halorhodospira halophila (strain DSM 244 / SL1) (Ectothiorhodospira halophila (strain DSM 244 / SL1)).